The sequence spans 236 residues: Uridylate kinase (236 aa).

Residue 10–13 (KLSG) coordinates ATP. G52 contributes to the UMP binding site. ATP contacts are provided by G53 and R57. UMP contacts are provided by residues D72 and 133–140 (TGNPFFTT). 3 residues coordinate ATP: T160, Y166, and D169.

The protein belongs to the UMP kinase family. In terms of assembly, homohexamer.

The protein localises to the cytoplasm. It catalyses the reaction UMP + ATP = UDP + ADP. It participates in pyrimidine metabolism; CTP biosynthesis via de novo pathway; UDP from UMP (UMPK route): step 1/1. Inhibited by UTP. Functionally, catalyzes the reversible phosphorylation of UMP to UDP. The polypeptide is Uridylate kinase (Cupriavidus metallidurans (strain ATCC 43123 / DSM 2839 / NBRC 102507 / CH34) (Ralstonia metallidurans)).